The following is a 316-amino-acid chain: Bifunctional riboflavin kinase/FMN adenylyltransferase (316 aa).

Belongs to the RibF family.

It carries out the reaction riboflavin + ATP = FMN + ADP + H(+). It catalyses the reaction FMN + ATP + H(+) = FAD + diphosphate. It functions in the pathway cofactor biosynthesis; FAD biosynthesis; FAD from FMN: step 1/1. The protein operates within cofactor biosynthesis; FMN biosynthesis; FMN from riboflavin (ATP route): step 1/1. In terms of biological role, catalyzes the phosphorylation of riboflavin to FMN followed by the adenylation of FMN to FAD. This is Bifunctional riboflavin kinase/FMN adenylyltransferase (ribC) from Bacillus subtilis (strain 168).